The primary structure comprises 449 residues: Kynurenine 3-monooxygenase (449 aa).

This sequence belongs to the aromatic-ring hydroxylase family. KMO subfamily. FAD serves as cofactor.

It catalyses the reaction L-kynurenine + NADPH + O2 + H(+) = 3-hydroxy-L-kynurenine + NADP(+) + H2O. The protein operates within cofactor biosynthesis; NAD(+) biosynthesis; quinolinate from L-kynurenine: step 1/3. In terms of biological role, catalyzes the hydroxylation of L-kynurenine (L-Kyn) to form 3-hydroxy-L-kynurenine (L-3OHKyn). Required for synthesis of quinolinic acid. This chain is Kynurenine 3-monooxygenase, found in Legionella pneumophila (strain Lens).